A 145-amino-acid polypeptide reads, in one-letter code: Hemoglobin subunit beta (145 aa).

In terms of domain architecture, Globin spans 1–145 (MLTAEEKAAV…VANALAHRYH (145 aa)). Thr-11 carries the post-translational modification Phosphothreonine. N6-acetyllysine is present on Lys-58. A heme b-binding site is contributed by His-62. Lys-81 carries the post-translational modification N6-acetyllysine. Position 91 (His-91) interacts with heme b. Cys-92 is subject to S-nitrosocysteine.

Belongs to the globin family. As to quaternary structure, heterotetramer of two alpha chains and two beta chains. In terms of tissue distribution, red blood cells.

In terms of biological role, involved in oxygen transport from the lung to the various peripheral tissues. The protein is Hemoglobin subunit beta (HBB) of Ovis aries musimon (Mouflon).